Reading from the N-terminus, the 322-residue chain is CRISPR-associated endonuclease Cas1 (322 aa).

Mn(2+) contacts are provided by Glu149, His214, and Glu229.

It belongs to the CRISPR-associated endonuclease Cas1 family. Homodimer, forms a heterotetramer with a Cas2 homodimer. Requires Mg(2+) as cofactor. Mn(2+) is required as a cofactor.

Functionally, CRISPR (clustered regularly interspaced short palindromic repeat), is an adaptive immune system that provides protection against mobile genetic elements (viruses, transposable elements and conjugative plasmids). CRISPR clusters contain spacers, sequences complementary to antecedent mobile elements, and target invading nucleic acids. CRISPR clusters are transcribed and processed into CRISPR RNA (crRNA). Acts as a dsDNA endonuclease. Involved in the integration of spacer DNA into the CRISPR cassette. The polypeptide is CRISPR-associated endonuclease Cas1 (Pyrococcus horikoshii (strain ATCC 700860 / DSM 12428 / JCM 9974 / NBRC 100139 / OT-3)).